A 248-amino-acid polypeptide reads, in one-letter code: Granzyme C (248 aa).

Residues 1 to 18 (MPPVLILLTLLLPLRAGA) form the signal peptide. The propeptide occupies 19–20 (EE). The region spanning 21-246 (IIGGNEISPH…FVSWIKKTMK (226 aa)) is the Peptidase S1 domain. A disulfide bridge links C50 with C66. Active-site charge relay system residues include H65 and D109. Cystine bridges form between C143–C210 and C174–C189. S204 (charge relay system) is an active-site residue.

This sequence belongs to the peptidase S1 family. Granzyme subfamily.

The protein resides in the cytolytic granule. This enzyme is probably necessary for target cell lysis in cell-mediated immune responses. The chain is Granzyme C (Gzmc) from Mus musculus (Mouse).